Reading from the N-terminus, the 643-residue chain is Phosphomethylpyrimidine synthase (643 aa).

Substrate-binding positions include Asn248, Met277, Tyr306, His342, 362–364, 403–406, and Glu442; these read SRG and DGLR. His446 is a Zn(2+) binding site. Tyr469 is a binding site for substrate. His510 contacts Zn(2+). 3 residues coordinate [4Fe-4S] cluster: Cys590, Cys593, and Cys598.

It belongs to the ThiC family. Homodimer. [4Fe-4S] cluster serves as cofactor.

The catalysed reaction is 5-amino-1-(5-phospho-beta-D-ribosyl)imidazole + S-adenosyl-L-methionine = 4-amino-2-methyl-5-(phosphooxymethyl)pyrimidine + CO + 5'-deoxyadenosine + formate + L-methionine + 3 H(+). It functions in the pathway cofactor biosynthesis; thiamine diphosphate biosynthesis. Its function is as follows. Catalyzes the synthesis of the hydroxymethylpyrimidine phosphate (HMP-P) moiety of thiamine from aminoimidazole ribotide (AIR) in a radical S-adenosyl-L-methionine (SAM)-dependent reaction. This is Phosphomethylpyrimidine synthase from Burkholderia ambifaria (strain ATCC BAA-244 / DSM 16087 / CCUG 44356 / LMG 19182 / AMMD) (Burkholderia cepacia (strain AMMD)).